We begin with the raw amino-acid sequence, 428 residues long: MSSEFFIPDPEGQVPTAEGYFGAFGGKFIPEALVAAVDEVAVEYDKAKADPEFARELDDLLVHYTGRPSALTEVSRFAEHAGGARVFLKREDLNHTGSHKINNVLGQALLTRRMGKTRVIAETGAGQHGVATATACALFGLDCTIYMGEIDTQRQALNVARMRMLGAEVIAVKSGSRTLKDAINEAFRDWVANVDRTHYLFGTVAGPHPFPAMVRDFHRVIGVEARRQILERAGRLPDAAVACVGGGSNAIGLFHAFIPDTGVRLIGCEPAGHGLETGEHAATLTAGEPGILHGSRSYVLQDDEGQITEPYSISAGLDYPGIGPEHAYLKDSGRGEYRAVTDDAAMQALRLLSRTEGIIPAIESAHALAGALEIGKELGKDGLILVNLSGRGDKDMDTAARYFGLYDTDASVAADADSDIAEIEGDAK.

Lys100 is modified (N6-(pyridoxal phosphate)lysine).

This sequence belongs to the TrpB family. As to quaternary structure, tetramer of two alpha and two beta chains. The cofactor is pyridoxal 5'-phosphate.

It carries out the reaction (1S,2R)-1-C-(indol-3-yl)glycerol 3-phosphate + L-serine = D-glyceraldehyde 3-phosphate + L-tryptophan + H2O. The protein operates within amino-acid biosynthesis; L-tryptophan biosynthesis; L-tryptophan from chorismate: step 5/5. Its function is as follows. The beta subunit is responsible for the synthesis of L-tryptophan from indole and L-serine. This Streptomyces avermitilis (strain ATCC 31267 / DSM 46492 / JCM 5070 / NBRC 14893 / NCIMB 12804 / NRRL 8165 / MA-4680) protein is Tryptophan synthase beta chain.